Reading from the N-terminus, the 284-residue chain is Flavin-dependent thymidylate synthase (284 aa).

Residues 27-237 (GFIRVVDYMG…PLAYNAFVEY (211 aa)) form the ThyX domain. FAD is bound by residues T73, 96–98 (RHR), and E104. Residues 93–96 (QWIR) and 104–108 (EYSAR) each bind dUMP. The ThyX motif motif lies at 96–106 (RHRTANVNEYS). Residues 122–142 (EQVAKQSDNNKQGSGEAFDPD) form a disordered region. Over residues 125 to 134 (AKQSDNNKQG) the composition is skewed to polar residues. R176 serves as a coordination point for dUMP. FAD-binding positions include 192 to 194 (DLH) and H198. DUMP is bound at residue R203. R203 serves as the catalytic Involved in ionization of N3 of dUMP, leading to its activation.

This sequence belongs to the thymidylate synthase ThyX family. Homotetramer. The cofactor is FAD.

The enzyme catalyses dUMP + (6R)-5,10-methylene-5,6,7,8-tetrahydrofolate + NADPH + H(+) = dTMP + (6S)-5,6,7,8-tetrahydrofolate + NADP(+). It participates in pyrimidine metabolism; dTTP biosynthesis. Functionally, catalyzes the reductive methylation of 2'-deoxyuridine-5'-monophosphate (dUMP) to 2'-deoxythymidine-5'-monophosphate (dTMP) while utilizing 5,10-methylenetetrahydrofolate (mTHF) as the methyl donor, and NADPH and FADH(2) as the reductant. The protein is Flavin-dependent thymidylate synthase of Wolbachia pipientis wMel.